The sequence spans 309 residues: Uracil phosphoribosyltransferase homolog (309 aa).

Residues 1–38 form a disordered region; the sequence is MATELQCPDSMPCHNQQVNSASTPSPEQLRPGDLILDH. The span at 13 to 26 shows a compositional bias: polar residues; it reads CHNQQVNSASTPSP. A Phosphoserine modification is found at S25. GTP is bound by residues R133, R142, and 176–179; that span reads EKGN. R186 contributes to the 5-phospho-alpha-D-ribose 1-diphosphate binding site. GTP contacts are provided by R203 and R232. Residue 238–246 participates in 5-phospho-alpha-D-ribose 1-diphosphate binding; the sequence is YPILSTGNT. Residue 299 to 301 coordinates uracil; sequence THF.

It belongs to the UPRTase family. In terms of tissue distribution, highly expressed in leukocytes, liver, spleen and thymus, with lower expression in brain, lung and skeletal muscle.

It localises to the cytoplasm. It is found in the nucleus. The chain is Uracil phosphoribosyltransferase homolog (UPRT) from Homo sapiens (Human).